A 179-amino-acid polypeptide reads, in one-letter code: Putative undecaprenyl-phosphate N-acetylgalactosaminyl 1-phosphate transferase (179 aa).

Residues 39–59 form a helical membrane-spanning segment; the sequence is IWFALIGLAIALPMIAVFSIL.

The protein belongs to the bacterial sugar transferase family.

Its subcellular location is the cell membrane. The catalysed reaction is di-trans,octa-cis-undecaprenyl phosphate + UDP-N-acetyl-alpha-D-galactosamine = N-acetyl-alpha-D-galactosaminyl-di-trans,octa-cis-undecaprenyl diphosphate + UMP. It participates in cell wall biogenesis; teichuronic acid biosynthesis. Functionally, might mediate the very first reaction in teichuronic synthesis, i.e. the formation of lipid-linked N-acetylglucosamine. This is Putative undecaprenyl-phosphate N-acetylgalactosaminyl 1-phosphate transferase (tuaA) from Bacillus subtilis (strain 168).